The following is a 750-amino-acid chain: Glutathione biosynthesis bifunctional protein GshAB (750 aa).

The segment at 1–333 is glutamate--cysteine ligase; sequence MIIDRLLQRS…EANRLNDLIA (333 aa). Positions 32–51 are disordered; that stretch reads QPTQRVAQTPHPKTLGSRNY. The 259-residue stretch at 489 to 747 folds into the ATP-grasp domain; the sequence is KKILDEKHFP…ITPRILAKLF (259 aa). ATP is bound at residue 516–574; sequence SQIQDKPIVVKPKSTNFGLGISIFKTSANLASYEKAIDIAFTEDSAILVEEYIEGTEYR. Residues Asp696, Glu717, and Asn719 each contribute to the Mg(2+) site. Positions 696, 717, and 719 each coordinate Mn(2+).

This sequence in the N-terminal section; belongs to the glutamate--cysteine ligase type 1 family. Type 2 subfamily. As to quaternary structure, monomer. Requires Mg(2+) as cofactor. The cofactor is Mn(2+).

The catalysed reaction is L-cysteine + L-glutamate + ATP = gamma-L-glutamyl-L-cysteine + ADP + phosphate + H(+). It catalyses the reaction gamma-L-glutamyl-L-cysteine + glycine + ATP = glutathione + ADP + phosphate + H(+). Its pathway is sulfur metabolism; glutathione biosynthesis; glutathione from L-cysteine and L-glutamate: step 1/2. The protein operates within sulfur metabolism; glutathione biosynthesis; glutathione from L-cysteine and L-glutamate: step 2/2. Its function is as follows. Synthesizes glutathione from L-glutamate and L-cysteine via gamma-L-glutamyl-L-cysteine. The chain is Glutathione biosynthesis bifunctional protein GshAB from Streptococcus agalactiae serotype III (strain NEM316).